The sequence spans 785 residues: Neutral ceramidase (785 aa).

The N-terminal stretch at 1–35 (MEASSWLCYQARGFGSSRVWLWLLLALVLLNCSLV) is a signal peptide. Residue N31 is glycosylated (N-linked (GlcNAc...) asparagine). S359 serves as the catalytic Nucleophile. 3 N-linked (GlcNAc...) asparagine glycosylation sites follow: N377, N675, and N685.

The protein belongs to the neutral ceramidase family. In terms of tissue distribution, expressed in seedlings, with higher levels in roots than in shoots.

The protein resides in the secreted. It localises to the endoplasmic reticulum. Its subcellular location is the golgi apparatus. It carries out the reaction an N-acylsphing-4-enine + H2O = sphing-4-enine + a fatty acid. With respect to regulation, enhanced activity in the presence of calcium, magnesium, manganese and zinc ions, but inhibited activity in the presence of iron ion. Functionally, hydrolyzes the sphingolipid ceramide into sphingosine and free fatty acid. Uses ceramide instead of phytoceramide as substrate. This chain is Neutral ceramidase, found in Oryza sativa subsp. japonica (Rice).